The chain runs to 313 residues: Porphobilinogen deaminase (313 aa).

C242 is subject to S-(dipyrrolylmethanemethyl)cysteine.

It belongs to the HMBS family. As to quaternary structure, monomer. Dipyrromethane is required as a cofactor.

It carries out the reaction 4 porphobilinogen + H2O = hydroxymethylbilane + 4 NH4(+). It participates in porphyrin-containing compound metabolism; protoporphyrin-IX biosynthesis; coproporphyrinogen-III from 5-aminolevulinate: step 2/4. Its function is as follows. Tetrapolymerization of the monopyrrole PBG into the hydroxymethylbilane pre-uroporphyrinogen in several discrete steps. This chain is Porphobilinogen deaminase (hemC), found in Proteus mirabilis.